We begin with the raw amino-acid sequence, 189 residues long: MADKSYQPTLAGLRAFAAVAEKQHFGSAASALGVNQSTLSQALAGLESGLGVRLIERSTRRVFLTPEGRQLLPHARAVLEAVDAFTAAAAGASDPLQGSLRLGLIPTMAPYVLPTVLAGLAERLPALTLRVVEDQTERLLAALREGALDAALIALPAETSGLSAVPIYDEDFVLALPPGHPLSGKRRVP.

An HTH lysR-type domain is found at Pro8–Thr65. The segment at residues Phe25–Ala44 is a DNA-binding region (H-T-H motif).

Belongs to the LysR transcriptional regulatory family.

In terms of biological role, required for the induction the katG gene for catalase. Involved in the response to hydrogen peroxide. The protein is Probable hydrogen peroxide-inducible genes activator (oxyR) of Mycobacterium xenopi.